A 578-amino-acid chain; its full sequence is Probable multidrug ABC transporter ATP-binding protein YbhF (578 aa).

ABC transporter domains are found at residues 6–237 and 330–559; these read ITLN…LMTS and IEAK…PDPT. ATP contacts are provided by residues 40–47 and 362–369; these read GPDGAGKT and GPNGAGKS.

The protein belongs to the ABC transporter superfamily. As to quaternary structure, the complex is probably composed of two ATP-binding proteins (YbhF) and two transmembrane proteins (YbhR and YbhS).

In terms of biological role, part of the ABC transporter complex YbhFSR that could be involved in efflux of cefoperazone. Probably responsible for energy coupling to the transport system. The polypeptide is Probable multidrug ABC transporter ATP-binding protein YbhF (ybhF) (Escherichia coli (strain K12)).